Here is a 224-residue protein sequence, read N- to C-terminus: 2-C-methyl-D-erythritol 4-phosphate cytidylyltransferase (224 aa).

Belongs to the IspD/TarI cytidylyltransferase family. IspD subfamily.

It carries out the reaction 2-C-methyl-D-erythritol 4-phosphate + CTP + H(+) = 4-CDP-2-C-methyl-D-erythritol + diphosphate. It functions in the pathway isoprenoid biosynthesis; isopentenyl diphosphate biosynthesis via DXP pathway; isopentenyl diphosphate from 1-deoxy-D-xylulose 5-phosphate: step 2/6. Catalyzes the formation of 4-diphosphocytidyl-2-C-methyl-D-erythritol from CTP and 2-C-methyl-D-erythritol 4-phosphate (MEP). This chain is 2-C-methyl-D-erythritol 4-phosphate cytidylyltransferase, found in Bordetella petrii (strain ATCC BAA-461 / DSM 12804 / CCUG 43448).